We begin with the raw amino-acid sequence, 512 residues long: Histidine ammonia-lyase (512 aa).

A cross-link (5-imidazolinone (Ala-Gly)) is located at residues 142-144 (ASG). Position 143 is a 2,3-didehydroalanine (Ser) (Ser143).

It belongs to the PAL/histidase family. Post-translationally, contains an active site 4-methylidene-imidazol-5-one (MIO), which is formed autocatalytically by cyclization and dehydration of residues Ala-Ser-Gly.

It is found in the cytoplasm. The enzyme catalyses L-histidine = trans-urocanate + NH4(+). Its pathway is amino-acid degradation; L-histidine degradation into L-glutamate; N-formimidoyl-L-glutamate from L-histidine: step 1/3. The chain is Histidine ammonia-lyase from Bartonella henselae (strain ATCC 49882 / DSM 28221 / CCUG 30454 / Houston 1) (Rochalimaea henselae).